The primary structure comprises 344 residues: Cinnamoyl-CoA reductase 1 (344 aa).

Phosphoserine is present on serine 7. NADP(+) contacts are provided by residues 17–23 (GAGGYIA), arginine 42, lysine 48, 68–69 (DL), 88–90 (TAS), tyrosine 161, lysine 165, 188–191 (PVLV), and serine 203. Cysteine 154 and cysteine 162 are oxidised to a cystine. Lysine 165 (proton donor) is an active-site residue. Residues 317 to 344 (QEKGHLAPPPPPPSASQESVENGIKIGS) form a disordered region.

This sequence belongs to the NAD(P)-dependent epimerase/dehydratase family. Dihydroflavonol-4-reductase subfamily. As to expression, expressed in leaves, stems and flowers.

It carries out the reaction (E)-cinnamaldehyde + NADP(+) + CoA = (E)-cinnamoyl-CoA + NADPH + H(+). It participates in aromatic compound metabolism; phenylpropanoid biosynthesis. Involved in the latter stages of lignin biosynthesis. Catalyzes one of the last steps of monolignol biosynthesis, the conversion of cinnamoyl-CoAs into their corresponding cinnamaldehydes. The sequence is that of Cinnamoyl-CoA reductase 1 from Arabidopsis thaliana (Mouse-ear cress).